The primary structure comprises 398 residues: Alpha-monoglucosyldiacylglycerol synthase (398 aa).

It belongs to the glycosyltransferase group 1 family. Glycosyltransferase 4 subfamily. The cofactor is Mg(2+).

Its subcellular location is the cell membrane. The enzyme catalyses a 1,2-diacyl-sn-glycerol + UDP-alpha-D-glucose = a 1,2-diacyl-3-O-(alpha-D-glucopyranosyl)-sn-glycerol + UDP + H(+). With respect to regulation, activated by the negatively charged lipids phosphatidylglycerol (PG), cardiolipin (CL), dodecylphosphate-rac-glycerol (PDG), 1,2-dioleoyl-phosphatidylglycerol (DOPG) and phosphatidylserine (PS). Functionally, glucosyltransferase involved in the biosynthesis of the non-bilayer-prone membrane lipid alpha-monoglucosyldiacylglycerol. This is a major component for maintaining a certain anionic lipid surface charge density, for balancing the bilayer to non-bilayer phase equilibria and for keeping a constant lipid bilayer spontaneous curvature (curvature packing stress). Catalyzes the transfer of a glucosyl residue from UDP-Glc to diacylglycerol (DAG) acceptor to form the corresponding alpha-glucosyl-DAG (1,2-diacyl-3-O-(alpha-D-glucopyranosyl)-sn-glycerol). It can only use UDP-Glc as sugar donor and DAG is the preferred substrate. The sequence is that of Alpha-monoglucosyldiacylglycerol synthase (mgs) from Acholeplasma laidlawii.